The following is an 89-amino-acid chain: MSLSTEKKAAIVAEFGRDAKDTGSSEVQIALLTAQINHLQAHFSTHKKDHHGRRGLLRMVSRRRKLLDYLKRTDLAKYSEIIARLGLRR.

It belongs to the universal ribosomal protein uS15 family. In terms of assembly, part of the 30S ribosomal subunit. Forms a bridge to the 50S subunit in the 70S ribosome, contacting the 23S rRNA.

In terms of biological role, one of the primary rRNA binding proteins, it binds directly to 16S rRNA where it helps nucleate assembly of the platform of the 30S subunit by binding and bridging several RNA helices of the 16S rRNA. Its function is as follows. Forms an intersubunit bridge (bridge B4) with the 23S rRNA of the 50S subunit in the ribosome. The sequence is that of Small ribosomal subunit protein uS15 from Histophilus somni (strain 129Pt) (Haemophilus somnus).